The chain runs to 427 residues: Proteinase-activated receptor 1 (427 aa).

An N-terminal signal peptide occupies residues M1–S21. A propeptide spans A22–R41 (removed for receptor activation). The tract at residues R23–P87 is disordered. An N-linked (GlcNAc...) asparagine glycan is attached at N35. Residues S42 to T104 are Extracellular-facing. Residues P58–F68 are compositionally biased toward acidic residues. Residue N77 is glycosylated (N-linked (GlcNAc...) asparagine). Residues V105–V130 traverse the membrane as a helical segment. Over L131–A139 the chain is Cytoplasmic. Residues V140–F159 form a helical membrane-spanning segment. The Extracellular portion of the chain corresponds to K160–R178. C177 and C256 are oxidised to a cystine. Residues F179–V200 form a helical membrane-spanning segment. Topologically, residues D201 to R220 are cytoplasmic. Residues A221–L241 traverse the membrane as a helical segment. Residues Q242–S270 lie on the Extracellular side of the membrane. N-linked (GlcNAc...) asparagine glycans are attached at residues N252 and N261. A helical transmembrane segment spans residues Y271 to V290. At S291 to A313 the chain is on the cytoplasmic side. A helical transmembrane segment spans residues L314–L336. Residues L337–A351 are Extracellular-facing. Residues Y352–A376 form a helical membrane-spanning segment. At S377 to T427 the chain is on the cytoplasmic side. S420 is modified (phosphoserine).

The protein belongs to the G-protein coupled receptor 1 family. Proteolytic cleavage by thrombin generates a new N-terminus that functions as a tethered ligand. Also proteolytically cleaved by cathepsin CTSG. In terms of processing, phosphorylated in the C-terminal tail; probably mediating desensitization prior to the uncoupling and internalization of the receptor.

It localises to the cell membrane. Its function is as follows. High affinity receptor that binds the activated thrombin, leading to calcium release from intracellular stores. The thrombin-activated receptor signaling pathway is mediated through PTX-insensitive G proteins, activation of phospholipase C resulting in the production of 1D-myo-inositol 1,4,5-trisphosphate (InsP3) which binds to InsP3 receptors causing calcium release from the stores. In astrocytes, the calcium released into the cytosol allows the Ca(2+)-dependent release of L-glutamate into the synaptic cleft through BEST1, that targets the neuronal postsynaptic GRIN2A/NMDAR receptor resulting in the synaptic plasticity regulation. May play a role in platelets activation and in vascular development. Mediates up-regulation of pro-inflammatory cytokines, such as MCP-1/CCL2 and IL6, triggered by coagulation factor Xa (F10) in cardiac fibroblasts and umbilical vein endothelial cells. In Bos taurus (Bovine), this protein is Proteinase-activated receptor 1.